A 696-amino-acid chain; its full sequence is UvrABC system protein B (696 aa).

The region spanning 45–434 is the Helicase ATP-binding domain; that stretch reads EGIGDGLSYQ…DEVVEQVVRP (390 aa). 58-65 is a binding site for ATP; that stretch reads GVTGSGKT. A Beta-hairpin motif is present at residues 111–134; the sequence is YYDYYQPEAYVPQRDLFIEKDSSV. The Helicase C-terminal domain occupies 450 to 616; the sequence is QVDDLLSEIH…GVVKRIKDII (167 aa). The UVR domain occupies 647 to 682; the sequence is GKEIKRLEKQMLDHAKNLEFEKAAAVRDQLAKLKSQ.

Belongs to the UvrB family. As to quaternary structure, forms a heterotetramer with UvrA during the search for lesions. Interacts with UvrC in an incision complex.

The protein localises to the cytoplasm. Its function is as follows. The UvrABC repair system catalyzes the recognition and processing of DNA lesions. A damage recognition complex composed of 2 UvrA and 2 UvrB subunits scans DNA for abnormalities. Upon binding of the UvrA(2)B(2) complex to a putative damaged site, the DNA wraps around one UvrB monomer. DNA wrap is dependent on ATP binding by UvrB and probably causes local melting of the DNA helix, facilitating insertion of UvrB beta-hairpin between the DNA strands. Then UvrB probes one DNA strand for the presence of a lesion. If a lesion is found the UvrA subunits dissociate and the UvrB-DNA preincision complex is formed. This complex is subsequently bound by UvrC and the second UvrB is released. If no lesion is found, the DNA wraps around the other UvrB subunit that will check the other stand for damage. This is UvrABC system protein B from Ralstonia nicotianae (strain ATCC BAA-1114 / GMI1000) (Ralstonia solanacearum).